The sequence spans 336 residues: Holliday junction branch migration complex subunit RuvB (336 aa).

The segment at 4–184 is large ATPase domain (RuvB-L); the sequence is ADRLISAGAT…FGIVQRLEFY (181 aa). ATP is bound by residues Ile23, Arg24, Gly65, Lys68, Thr69, Thr70, 131–133, Arg174, Tyr184, and Arg221; that span reads EDY. Thr69 serves as a coordination point for Mg(2+). The tract at residues 185–255 is small ATPAse domain (RuvB-S); it reads QVPDLQHIVG…IAAQALDMLN (71 aa). A head domain (RuvB-H) region spans residues 258–336; it reads AEGFDYMDRK…HFGITPPEMP (79 aa). The DNA site is built by Arg294, Arg313, and Arg318.

Belongs to the RuvB family. Homohexamer. Forms an RuvA(8)-RuvB(12)-Holliday junction (HJ) complex. HJ DNA is sandwiched between 2 RuvA tetramers; dsDNA enters through RuvA and exits via RuvB. An RuvB hexamer assembles on each DNA strand where it exits the tetramer. Each RuvB hexamer is contacted by two RuvA subunits (via domain III) on 2 adjacent RuvB subunits; this complex drives branch migration. In the full resolvosome a probable DNA-RuvA(4)-RuvB(12)-RuvC(2) complex forms which resolves the HJ.

Its subcellular location is the cytoplasm. The catalysed reaction is ATP + H2O = ADP + phosphate + H(+). The RuvA-RuvB-RuvC complex processes Holliday junction (HJ) DNA during genetic recombination and DNA repair, while the RuvA-RuvB complex plays an important role in the rescue of blocked DNA replication forks via replication fork reversal (RFR). RuvA specifically binds to HJ cruciform DNA, conferring on it an open structure. The RuvB hexamer acts as an ATP-dependent pump, pulling dsDNA into and through the RuvAB complex. RuvB forms 2 homohexamers on either side of HJ DNA bound by 1 or 2 RuvA tetramers; 4 subunits per hexamer contact DNA at a time. Coordinated motions by a converter formed by DNA-disengaged RuvB subunits stimulates ATP hydrolysis and nucleotide exchange. Immobilization of the converter enables RuvB to convert the ATP-contained energy into a lever motion, pulling 2 nucleotides of DNA out of the RuvA tetramer per ATP hydrolyzed, thus driving DNA branch migration. The RuvB motors rotate together with the DNA substrate, which together with the progressing nucleotide cycle form the mechanistic basis for DNA recombination by continuous HJ branch migration. Branch migration allows RuvC to scan DNA until it finds its consensus sequence, where it cleaves and resolves cruciform DNA. The chain is Holliday junction branch migration complex subunit RuvB from Salmonella choleraesuis (strain SC-B67).